A 76-amino-acid chain; its full sequence is Small ribosomal subunit protein uS17 (76 aa).

Belongs to the universal ribosomal protein uS17 family. In terms of assembly, part of the 30S ribosomal subunit.

Functionally, one of the primary rRNA binding proteins, it binds specifically to the 5'-end of 16S ribosomal RNA. The chain is Small ribosomal subunit protein uS17 from Anaplasma phagocytophilum (strain HZ).